The primary structure comprises 254 residues: Triosephosphate isomerase (254 aa).

12–14 (NWK) is a substrate binding site. H99 acts as the Electrophile in catalysis. E169 (proton acceptor) is an active-site residue. Substrate-binding positions include G175, S214, and 235 to 236 (GG).

The protein belongs to the triosephosphate isomerase family. Homodimer.

The protein resides in the cytoplasm. It carries out the reaction D-glyceraldehyde 3-phosphate = dihydroxyacetone phosphate. It functions in the pathway carbohydrate biosynthesis; gluconeogenesis. It participates in carbohydrate degradation; glycolysis; D-glyceraldehyde 3-phosphate from glycerone phosphate: step 1/1. Involved in the gluconeogenesis. Catalyzes stereospecifically the conversion of dihydroxyacetone phosphate (DHAP) to D-glyceraldehyde-3-phosphate (G3P). The chain is Triosephosphate isomerase from Brucella abortus biovar 1 (strain 9-941).